A 223-amino-acid polypeptide reads, in one-letter code: MKFAVLVFPGSNCDRDMFNAAIKSGVEAEYVDYRETSLSGFDGVLIPGGFSFGDYLRSGAMASVAPVISEVKRLAAEGKPVLGVCNGFQILTEIGLLPGALLHNDSHLFISRNEELEIVNNQTAFTNLYEQGEKVIYPVAHGEGHYYCTDEIYQKLKANNQIILKYVNNPNGSYDDIAGIVNEKGNVCGMMPHPERALETLLGTDSGVKLFEAMVKSWREQHV.

In terms of domain architecture, Glutamine amidotransferase type-1 spans 3–223 (FAVLVFPGSN…MVKSWREQHV (221 aa)). The active-site Nucleophile is the C85. Residues H193 and E195 contribute to the active site.

In terms of assembly, part of the FGAM synthase complex composed of 1 PurL, 1 PurQ and 2 PurS subunits.

It localises to the cytoplasm. The enzyme catalyses N(2)-formyl-N(1)-(5-phospho-beta-D-ribosyl)glycinamide + L-glutamine + ATP + H2O = 2-formamido-N(1)-(5-O-phospho-beta-D-ribosyl)acetamidine + L-glutamate + ADP + phosphate + H(+). It catalyses the reaction L-glutamine + H2O = L-glutamate + NH4(+). It participates in purine metabolism; IMP biosynthesis via de novo pathway; 5-amino-1-(5-phospho-D-ribosyl)imidazole from N(2)-formyl-N(1)-(5-phospho-D-ribosyl)glycinamide: step 1/2. Its function is as follows. Part of the phosphoribosylformylglycinamidine synthase complex involved in the purines biosynthetic pathway. Catalyzes the ATP-dependent conversion of formylglycinamide ribonucleotide (FGAR) and glutamine to yield formylglycinamidine ribonucleotide (FGAM) and glutamate. The FGAM synthase complex is composed of three subunits. PurQ produces an ammonia molecule by converting glutamine to glutamate. PurL transfers the ammonia molecule to FGAR to form FGAM in an ATP-dependent manner. PurS interacts with PurQ and PurL and is thought to assist in the transfer of the ammonia molecule from PurQ to PurL. This Staphylococcus aureus (strain MRSA252) protein is Phosphoribosylformylglycinamidine synthase subunit PurQ.